The primary structure comprises 1755 residues: Transposon Ty1-NL1 Gag-Pol polyprotein (1755 aa).

Polar residues-rich tracts occupy residues 1-23 (MESQQLSQHSPISHGSACASVTS), 48-60 (TKANSQQTTTPAS), 71-86 (SPQTAQSHSPQNGPYQ), and 131-152 (PQYPSSVGTPLSTPSPESGNTF). Disordered stretches follow at residues 1 to 86 (MESQ…GPYQ), 131 to 171 (PQYP…YVRP), and 350 to 420 (QQES…IRGS). Residues 153-165 (TDSSSADSDMTST) are compositionally biased toward low complexity. The tract at residues 299–401 (NNGIPINNKV…NSQSRTARAH (103 aa)) is RNA-binding. The segment covering 363 to 372 (NPSDEKKDSR) has biased composition (basic and acidic residues). Residues 373–412 (TYTNTTKPKSITRNSQKPNNSQSRTARAHNVSTSNNSSGP) show a composition bias toward polar residues. Aspartate 461 acts as the For protease activity; shared with dimeric partner in catalysis. The segment at 583-640 (NVHTSESTRKYPYPFIHRMLAHANAQTIRYSLKNNTITYFNESDVDWSSAIDYQCPDC) is integrase-type zinc finger-like. The Integrase catalytic domain occupies 660–835 (NSYEPFQYLH…AGLDISTLLP (176 aa)). Mg(2+) is bound by residues aspartate 671 and aspartate 736. 2 disordered regions span residues 956–1120 (SKAV…TCPK) and 1146–1172 (DSFKELPPINSRQTNSSLGGIGDSNAY). The segment covering 960–969 (SPTDSTPPST) has biased composition (low complexity). Polar residues predominate over residues 1005–1015 (STPQISDIEST). Basic and acidic residues predominate over residues 1038–1053 (ESSHTSKSKDFRHSDS). 2 stretches are compositionally biased toward polar residues: residues 1054–1082 (YSDNETNHTNVPISSTGGTNNKTVPQTSE) and 1095–1106 (SIDTSSSESNSL). Positions 1178–1212 (KKRSLEDNETEIKVSRDTWNTKNMRSLEPPRSKKR) match the Bipartite nuclear localization signal motif. Positions 1338 to 1476 (NNYYITQLDI…DILGLEIKYQ (139 aa)) constitute a Reverse transcriptase Ty1/copia-type domain. Mg(2+) is bound by residues aspartate 1346, aspartate 1427, aspartate 1428, aspartate 1610, glutamate 1652, and aspartate 1685. An RNase H Ty1/copia-type domain is found at 1610–1752 (DASYGNQPYY…IKTFKLLTNK (143 aa)).

As to quaternary structure, the capsid protein forms a homotrimer, from which the VLPs are assembled. The protease is a homodimer, whose active site consists of two apposed aspartic acid residues. In terms of processing, initially, virus-like particles (VLPs) are composed of the structural unprocessed proteins Gag and Gag-Pol, and also contain the host initiator methionine tRNA (tRNA(i)-Met) which serves as a primer for minus-strand DNA synthesis, and a dimer of genomic Ty RNA. Processing of the polyproteins occurs within the particle and proceeds by an ordered pathway, called maturation. First, the protease (PR) is released by autocatalytic cleavage of the Gag-Pol polyprotein yielding capsid protein p45 and a Pol-p154 precursor protein. This cleavage is a prerequisite for subsequent processing of Pol-p154 at the remaining sites to release the mature structural and catalytic proteins. Maturation takes place prior to the RT reaction and is required to produce transposition-competent VLPs.

The protein resides in the cytoplasm. Its subcellular location is the nucleus. The enzyme catalyses DNA(n) + a 2'-deoxyribonucleoside 5'-triphosphate = DNA(n+1) + diphosphate. The catalysed reaction is Endonucleolytic cleavage to 5'-phosphomonoester.. Functionally, capsid protein (CA) is the structural component of the virus-like particle (VLP), forming the shell that encapsulates the retrotransposons dimeric RNA genome. The particles are assembled from trimer-clustered units and there are holes in the capsid shells that allow for the diffusion of macromolecules. CA also has nucleocapsid-like chaperone activity, promoting primer tRNA(i)-Met annealing to the multipartite primer-binding site (PBS), dimerization of Ty1 RNA and initiation of reverse transcription. The aspartyl protease (PR) mediates the proteolytic cleavages of the Gag and Gag-Pol polyproteins after assembly of the VLP. Its function is as follows. Reverse transcriptase/ribonuclease H (RT) is a multifunctional enzyme that catalyzes the conversion of the retro-elements RNA genome into dsDNA within the VLP. The enzyme displays a DNA polymerase activity that can copy either DNA or RNA templates, and a ribonuclease H (RNase H) activity that cleaves the RNA strand of RNA-DNA heteroduplexes during plus-strand synthesis and hydrolyzes RNA primers. The conversion leads to a linear dsDNA copy of the retrotransposon that includes long terminal repeats (LTRs) at both ends. In terms of biological role, integrase (IN) targets the VLP to the nucleus, where a subparticle preintegration complex (PIC) containing at least integrase and the newly synthesized dsDNA copy of the retrotransposon must transit the nuclear membrane. Once in the nucleus, integrase performs the integration of the dsDNA into the host genome. In Saccharomyces cerevisiae (strain ATCC 204508 / S288c) (Baker's yeast), this protein is Transposon Ty1-NL1 Gag-Pol polyprotein (TY1B-NL1).